We begin with the raw amino-acid sequence, 536 residues long: Phosphoenolpyruvate carboxykinase (ATP) (536 aa).

Substrate is bound by residues Arg63, Tyr203, and Lys209. ATP is bound by residues Lys209, His228, and 244–252 (GLSGTGKTT). Mn(2+) contacts are provided by Lys209 and His228. Mn(2+) is bound at residue Asp265. ATP-binding positions include Glu293, Arg329, 445–446 (RI), and Thr451. Substrate is bound at residue Arg329.

This sequence belongs to the phosphoenolpyruvate carboxykinase (ATP) family. As to quaternary structure, monomer. It depends on Mn(2+) as a cofactor.

The protein localises to the cytoplasm. It catalyses the reaction oxaloacetate + ATP = phosphoenolpyruvate + ADP + CO2. Its pathway is carbohydrate biosynthesis; gluconeogenesis. In terms of biological role, involved in the gluconeogenesis. Catalyzes the conversion of oxaloacetate (OAA) to phosphoenolpyruvate (PEP) through direct phosphoryl transfer between the nucleoside triphosphate and OAA. The chain is Phosphoenolpyruvate carboxykinase (ATP) from Colwellia psychrerythraea (strain 34H / ATCC BAA-681) (Vibrio psychroerythus).